We begin with the raw amino-acid sequence, 183 residues long: Ribosome-recycling factor (183 aa).

The protein belongs to the RRF family.

The protein localises to the cytoplasm. Responsible for the release of ribosomes from messenger RNA at the termination of protein biosynthesis. May increase the efficiency of translation by recycling ribosomes from one round of translation to another. The polypeptide is Ribosome-recycling factor (Deinococcus radiodurans (strain ATCC 13939 / DSM 20539 / JCM 16871 / CCUG 27074 / LMG 4051 / NBRC 15346 / NCIMB 9279 / VKM B-1422 / R1)).